The following is a 354-amino-acid chain: S-adenosylmethionine:tRNA ribosyltransferase-isomerase (354 aa).

This sequence belongs to the QueA family. In terms of assembly, monomer.

Its subcellular location is the cytoplasm. The catalysed reaction is 7-aminomethyl-7-carbaguanosine(34) in tRNA + S-adenosyl-L-methionine = epoxyqueuosine(34) in tRNA + adenine + L-methionine + 2 H(+). It participates in tRNA modification; tRNA-queuosine biosynthesis. Transfers and isomerizes the ribose moiety from AdoMet to the 7-aminomethyl group of 7-deazaguanine (preQ1-tRNA) to give epoxyqueuosine (oQ-tRNA). The polypeptide is S-adenosylmethionine:tRNA ribosyltransferase-isomerase (Salmonella paratyphi C (strain RKS4594)).